Consider the following 488-residue polypeptide: Aspartyl/glutamyl-tRNA(Asn/Gln) amidotransferase subunit B (488 aa).

Belongs to the GatB/GatE family. GatB subfamily. As to quaternary structure, heterotrimer of A, B and C subunits.

The enzyme catalyses L-glutamyl-tRNA(Gln) + L-glutamine + ATP + H2O = L-glutaminyl-tRNA(Gln) + L-glutamate + ADP + phosphate + H(+). It carries out the reaction L-aspartyl-tRNA(Asn) + L-glutamine + ATP + H2O = L-asparaginyl-tRNA(Asn) + L-glutamate + ADP + phosphate + 2 H(+). Its function is as follows. Allows the formation of correctly charged Asn-tRNA(Asn) or Gln-tRNA(Gln) through the transamidation of misacylated Asp-tRNA(Asn) or Glu-tRNA(Gln) in organisms which lack either or both of asparaginyl-tRNA or glutaminyl-tRNA synthetases. The reaction takes place in the presence of glutamine and ATP through an activated phospho-Asp-tRNA(Asn) or phospho-Glu-tRNA(Gln). The polypeptide is Aspartyl/glutamyl-tRNA(Asn/Gln) amidotransferase subunit B (Chlamydia trachomatis serovar L2 (strain ATCC VR-902B / DSM 19102 / 434/Bu)).